Here is a 473-residue protein sequence, read N- to C-terminus: Glutamate--tRNA ligase (473 aa).

A 'HIGH' region motif is present at residues 13 to 23; it reads PSPTGFLHVGG. The 'KMSKS' region signature appears at 240 to 244; it reads KLSKR. Lys-243 contributes to the ATP binding site.

This sequence belongs to the class-I aminoacyl-tRNA synthetase family. Glutamate--tRNA ligase type 1 subfamily. Monomer.

It localises to the cytoplasm. The enzyme catalyses tRNA(Glu) + L-glutamate + ATP = L-glutamyl-tRNA(Glu) + AMP + diphosphate. Functionally, catalyzes the attachment of glutamate to tRNA(Glu) in a two-step reaction: glutamate is first activated by ATP to form Glu-AMP and then transferred to the acceptor end of tRNA(Glu). This chain is Glutamate--tRNA ligase, found in Shewanella denitrificans (strain OS217 / ATCC BAA-1090 / DSM 15013).